A 123-amino-acid polypeptide reads, in one-letter code: Ribosome-binding factor A (123 aa).

Belongs to the RbfA family. Monomer. Binds 30S ribosomal subunits, but not 50S ribosomal subunits or 70S ribosomes.

It localises to the cytoplasm. In terms of biological role, one of several proteins that assist in the late maturation steps of the functional core of the 30S ribosomal subunit. Associates with free 30S ribosomal subunits (but not with 30S subunits that are part of 70S ribosomes or polysomes). Required for efficient processing of 16S rRNA. May interact with the 5'-terminal helix region of 16S rRNA. The polypeptide is Ribosome-binding factor A (Neisseria gonorrhoeae (strain NCCP11945)).